Here is a 340-residue protein sequence, read N- to C-terminus: tRNA N6-adenosine threonylcarbamoyltransferase (340 aa).

Residues His111 and His115 each contribute to the Fe cation site. Substrate is bound by residues 133-137, Asp166, Gly179, Asp183, and Asn273; that span reads VVSGG. A Fe cation-binding site is contributed by Asp301.

It belongs to the KAE1 / TsaD family. It depends on Fe(2+) as a cofactor.

Its subcellular location is the cytoplasm. The catalysed reaction is L-threonylcarbamoyladenylate + adenosine(37) in tRNA = N(6)-L-threonylcarbamoyladenosine(37) in tRNA + AMP + H(+). Its function is as follows. Required for the formation of a threonylcarbamoyl group on adenosine at position 37 (t(6)A37) in tRNAs that read codons beginning with adenine. Is involved in the transfer of the threonylcarbamoyl moiety of threonylcarbamoyl-AMP (TC-AMP) to the N6 group of A37, together with TsaE and TsaB. TsaD likely plays a direct catalytic role in this reaction. This Pelobacter propionicus (strain DSM 2379 / NBRC 103807 / OttBd1) protein is tRNA N6-adenosine threonylcarbamoyltransferase.